Consider the following 126-residue polypeptide: Cyclin-dependent kinase 2-associated protein 2 (126 aa).

A disordered region spans residues 1 to 48 (MSYKPIAPAPSSTPGSSTPGPGTPVPTGSVPSPSGSVPGAGAPFRPLF). Low complexity predominate over residues 9 to 43 (APSSTPGSSTPGPGTPVPTGSVPSPSGSVPGAGAP). Positions 64–106 (PPGAQGSQSTYTDLLSVIEEMGKEIRPTYAGSKSAMERLKRGI) are interaction with CDK2.

This sequence belongs to the CDK2AP family. In terms of assembly, component of the nucleosome remodeling and deacetylase (NuRD) repressor complex, composed of core proteins MTA1, MTA2, MTA3, RBBP4, RBBP7, HDAC1, HDAC2, MBD2, MBD3, and peripherally associated proteins CDK2AP1, CDK2AP2, GATAD2A, GATAD2B, CHD3, CHD4 and CHD5. The exact stoichiometry of the NuRD complex is unknown, and some subunits such as MBD2 and MBD3, GATAD2A and GATAD2B, and CHD3, CHD4 and CHD5 define mutually exclusive NuRD complexes. Interacts with CDK2AP1. Interacts with CDK2. Interacts with MAPK1. In terms of processing, phosphorylated by MAPK1 and CDK2. As to expression, ubiquitous.

Its subcellular location is the cytoplasm. The protein resides in the nucleus. Acts as a component of the histone deacetylase NuRD complex which participates in the remodeling of chromatin. Inhibits cell cycle G1/S phase transition by repressing CDK2 expression and activation; represses CDK2 activation by inhibiting its interaction with cyclin E and A. Plays a role in regulating the self-renewal of embryonic stem cells (ESCs) and in maintaining cell survival during terminal differentiation of ESCs. Regulates microtubule organization of metaphase II oocytes. The polypeptide is Cyclin-dependent kinase 2-associated protein 2 (CDK2AP2) (Homo sapiens (Human)).